The chain runs to 241 residues: LexA repressor (241 aa).

Residues 41-61 constitute a DNA-binding region (H-T-H motif); the sequence is FREIGNAAGLKSPSSVKHQLQ. Catalysis depends on for autocatalytic cleavage activity residues Ser-165 and Lys-202.

The protein belongs to the peptidase S24 family. In terms of assembly, homodimer.

The enzyme catalyses Hydrolysis of Ala-|-Gly bond in repressor LexA.. Its function is as follows. Represses a number of genes involved in the response to DNA damage (SOS response), including recA and lexA. In the presence of single-stranded DNA, RecA interacts with LexA causing an autocatalytic cleavage which disrupts the DNA-binding part of LexA, leading to derepression of the SOS regulon and eventually DNA repair. This is LexA repressor from Bifidobacterium longum subsp. infantis (strain ATCC 15697 / DSM 20088 / JCM 1222 / NCTC 11817 / S12).